A 520-amino-acid chain; its full sequence is Serine protease Hip1 (520 aa).

The signal sequence occupies residues 1–30 (MGMRLSRRDKIARMLLIWAALAAVALVLVG). Residue cysteine 31 is the site of N-palmitoyl cysteine attachment. Cysteine 31 carries the S-diacylglycerol cysteine lipid modification. An AB hydrolase-1 domain is found at 102–497 (GSLVINPGGP…TQHTVVFQGD (396 aa)). Residue serine 228 is the Nucleophile of the active site. Residue aspartate 463 is part of the active site. Catalysis depends on histidine 490, which acts as the Proton donor.

It belongs to the peptidase S33 family.

It localises to the cell envelope. Its subcellular location is the cell membrane. Functionally, serine protease that promotes pathogenesis by promoting the processing and the extracellular release of the M.bovis heat-shock protein GroEL2. In terms of biological role, key immunomodulatory virulence factor, which promotes survival in host macrophages and modulates host immune responses. The sequence is that of Serine protease Hip1 from Mycobacterium bovis (strain ATCC BAA-935 / AF2122/97).